Consider the following 217-residue polypeptide: uncharacterized protein (217 aa).

4 consecutive transmembrane segments (helical) span residues 9 to 29, 54 to 74, 103 to 125, and 135 to 157; these read ISLA…LSTI, FLST…LLEL, LMAY…RFLS, and IVFW…ASYI.

This sequence belongs to the DP1 family.

Its subcellular location is the endoplasmic reticulum membrane. This is an uncharacterized protein from Schizosaccharomyces pombe (strain 972 / ATCC 24843) (Fission yeast).